A 155-amino-acid chain; its full sequence is Transmembrane protein C1orf162 (155 aa).

Residues Met-1–Ala-28 form a disordered region. Positions Ser-19 to Ala-28 are enriched in low complexity. The helical transmembrane segment at Ile-41–Ile-61 threads the bilayer. Residues Ala-92–Pro-114 form a disordered region. Position 140 is a phosphoserine (Ser-140).

The protein localises to the membrane. This Homo sapiens (Human) protein is Transmembrane protein C1orf162 (C1orf162).